Reading from the N-terminus, the 318-residue chain is Aspartate carbamoyltransferase catalytic subunit (318 aa).

Residues arginine 54 and threonine 55 each contribute to the carbamoyl phosphate site. Lysine 82 lines the L-aspartate pocket. Residues arginine 104, histidine 134, and glutamine 137 each contribute to the carbamoyl phosphate site. L-aspartate contacts are provided by arginine 174 and arginine 230. The carbamoyl phosphate site is built by glycine 271 and proline 272.

This sequence belongs to the aspartate/ornithine carbamoyltransferase superfamily. ATCase family. Heterododecamer (2C3:3R2) of six catalytic PyrB chains organized as two trimers (C3), and six regulatory PyrI chains organized as three dimers (R2).

It catalyses the reaction carbamoyl phosphate + L-aspartate = N-carbamoyl-L-aspartate + phosphate + H(+). Its pathway is pyrimidine metabolism; UMP biosynthesis via de novo pathway; (S)-dihydroorotate from bicarbonate: step 2/3. Catalyzes the condensation of carbamoyl phosphate and aspartate to form carbamoyl aspartate and inorganic phosphate, the committed step in the de novo pyrimidine nucleotide biosynthesis pathway. In Clavibacter michiganensis subsp. michiganensis (strain NCPPB 382), this protein is Aspartate carbamoyltransferase catalytic subunit.